The following is a 327-amino-acid chain: Glycerol-3-phosphate dehydrogenase [NAD(P)+] (327 aa).

3 residues coordinate NADPH: Phe-13, Arg-34, and Lys-107. Residues Lys-107 and Gly-135 each coordinate sn-glycerol 3-phosphate. Ala-139 is a binding site for NADPH. Positions 190, 243, 253, 254, and 255 each coordinate sn-glycerol 3-phosphate. Catalysis depends on Lys-190, which acts as the Proton acceptor. Arg-254 serves as a coordination point for NADPH. NADPH-binding residues include Val-276 and Glu-277.

This sequence belongs to the NAD-dependent glycerol-3-phosphate dehydrogenase family.

It is found in the cytoplasm. It carries out the reaction sn-glycerol 3-phosphate + NAD(+) = dihydroxyacetone phosphate + NADH + H(+). It catalyses the reaction sn-glycerol 3-phosphate + NADP(+) = dihydroxyacetone phosphate + NADPH + H(+). The protein operates within membrane lipid metabolism; glycerophospholipid metabolism. Its function is as follows. Catalyzes the reduction of the glycolytic intermediate dihydroxyacetone phosphate (DHAP) to sn-glycerol 3-phosphate (G3P), the key precursor for phospholipid synthesis. The sequence is that of Glycerol-3-phosphate dehydrogenase [NAD(P)+] from Rhizobium johnstonii (strain DSM 114642 / LMG 32736 / 3841) (Rhizobium leguminosarum bv. viciae).